The sequence spans 436 residues: GTPase Der (436 aa).

EngA-type G domains lie at Pro-4–Gln-167 and Ile-176–Arg-351. GTP-binding positions include Gly-10 to Ser-17, Asp-57 to Ile-61, Asn-119 to Asp-122, Gly-182 to Ser-189, Asp-229 to Met-233, and Asn-294 to Asp-297. One can recognise a KH-like domain in the interval Lys-352–Asn-436.

This sequence belongs to the TRAFAC class TrmE-Era-EngA-EngB-Septin-like GTPase superfamily. EngA (Der) GTPase family. In terms of assembly, associates with the 50S ribosomal subunit.

In terms of biological role, GTPase that plays an essential role in the late steps of ribosome biogenesis. The protein is GTPase Der of Macrococcus caseolyticus (strain JCSC5402) (Macrococcoides caseolyticum).